The chain runs to 375 residues: Fasciculation and elongation protein zeta-2 (375 aa).

The tract at residues 1–42 (MAADGDWQDFYEFQEPAGSVRDQENCNASPEAGAGAHAGGDS) is disordered. 3 positions are modified to phosphoserine: Ser-130, Ser-171, and Ser-190. The stretch at 156–177 (TADQVIEEIEEMMQESPDLEDD) forms a coiled coil. Residues 206 to 281 (ERVKRLSVSE…AKKKKKLKNG (76 aa)) are a coiled coil. Residues 265–297 (QKEHKETAKKKKKLKNGSSQNGRNERSHMPGTR) form a disordered region.

The protein belongs to the zygin family. Homodimer; disulfide-linked. May form heterodimers with FEZ1. Interacts with synaptotagmin.

Its function is as follows. Involved in axonal outgrowth and fasciculation. This chain is Fasciculation and elongation protein zeta-2 (Fez2), found in Rattus norvegicus (Rat).